Here is a 327-residue protein sequence, read N- to C-terminus: 2-oxoglutarate-dependent dioxygenase traH (327 aa).

A Fe2OG dioxygenase domain is found at 183 to 290; that stretch reads TTDAAMFLKL…YAVPAFWHGD (108 aa). Fe cation-binding residues include His-211, Asp-213, and His-270. Arg-280 serves as a coordination point for 2-oxoglutarate.

It belongs to the iron/ascorbate-dependent oxidoreductase family. Fe(2+) serves as cofactor.

Its pathway is secondary metabolite biosynthesis. Its function is as follows. 2-oxoglutarate-dependent dioxygenase; part of the tra gene cluster that produces terrestric acid. The clavatol biosynthesis cluster cla and the terrestric acid cluster tra are both involved in the production of peniphenones and penilactones. The non-reducing PKS claF is responsible for the formation of clavatol from successive condensations of 3 malonyl-CoA units, presumably with a simple acetyl-CoA starter unit, and 2 methylation steps. The esterase claE probably collaborates with claF by catalyzing the hydrolysis of ACP-bound acyl intermediates to free the ACP from stalled intermediates. The clavatol oxidase claD then converts clavatol to hydroxyclavatol. Spontaneous dehydration of hydroxyclavatol leads to the accumulation of the highly active ortho-quinone methide. On the other hand, the PKS-NRPS hybrid traA is involved in the formation of crustosic acid, with the help of traB and traD. The polyketide synthase module (PKS) of traA is responsible for the synthesis of the polyketide backbone via the condensation of an acetyl-CoA starter unit with 3 malonyl-CoA units. The downstream nonribosomal peptide synthetase (NRPS) module then amidates the carboxyl end of the polyketide with L-malic acid. Because traA lacks a designated enoylreductase (ER) domain, the required activity is provided the enoyl reductase traG. Crustosic acid undergoes decarboxylation and isomerization to the terrestric acid, catalyzed by the 2-oxoglutarate-dependent dioxygenase traH. Both acids are further converted to the 2 gamma-butyrolactones (R)-5-methyltetronic acid and (S)-5-carboxylmethyltetronic acid, with involvement of the cytochrome P450 monooxygenase claJ. Spontaneous addition of the methide to these gamma-butyrolactones leads to peniphenone D and penilactone D, which undergo again stereospecific attacking by methide to give penilactones A and B. This Penicillium crustosum (Blue mold fungus) protein is 2-oxoglutarate-dependent dioxygenase traH.